A 222-amino-acid polypeptide reads, in one-letter code: Large ribosomal subunit protein uL4 (222 aa).

It belongs to the universal ribosomal protein uL4 family. As to quaternary structure, part of the 50S ribosomal subunit.

One of the primary rRNA binding proteins, this protein initially binds near the 5'-end of the 23S rRNA. It is important during the early stages of 50S assembly. It makes multiple contacts with different domains of the 23S rRNA in the assembled 50S subunit and ribosome. Its function is as follows. Forms part of the polypeptide exit tunnel. The polypeptide is Large ribosomal subunit protein uL4 (Chlamydia trachomatis serovar L2 (strain ATCC VR-902B / DSM 19102 / 434/Bu)).